Consider the following 295-residue polypeptide: Pyridoxal 5'-phosphate synthase subunit PdxS (295 aa).

Asp25 serves as a coordination point for D-ribose 5-phosphate. The Schiff-base intermediate with D-ribose 5-phosphate role is filled by Lys82. Gly154 is a binding site for D-ribose 5-phosphate. D-glyceraldehyde 3-phosphate is bound at residue Arg166. D-ribose 5-phosphate is bound by residues Gly215 and Gly236–Ser237.

This sequence belongs to the PdxS/SNZ family. As to quaternary structure, in the presence of PdxT, forms a dodecamer of heterodimers.

It carries out the reaction aldehydo-D-ribose 5-phosphate + D-glyceraldehyde 3-phosphate + L-glutamine = pyridoxal 5'-phosphate + L-glutamate + phosphate + 3 H2O + H(+). Its pathway is cofactor biosynthesis; pyridoxal 5'-phosphate biosynthesis. Its function is as follows. Catalyzes the formation of pyridoxal 5'-phosphate from ribose 5-phosphate (RBP), glyceraldehyde 3-phosphate (G3P) and ammonia. The ammonia is provided by the PdxT subunit. Can also use ribulose 5-phosphate and dihydroxyacetone phosphate as substrates, resulting from enzyme-catalyzed isomerization of RBP and G3P, respectively. In Oceanobacillus iheyensis (strain DSM 14371 / CIP 107618 / JCM 11309 / KCTC 3954 / HTE831), this protein is Pyridoxal 5'-phosphate synthase subunit PdxS.